The chain runs to 77 residues: Defensin-like protein 161 (77 aa).

The N-terminal stretch at 1–27 is a signal peptide; the sequence is MAKLSCSYLLVFMLVFSAILMVEKVEG. Disulfide bonds link C30/C77, C40/C59, C45/C71, and C49/C73.

This sequence belongs to the DEFL family.

Its subcellular location is the secreted. The sequence is that of Defensin-like protein 161 (LCR27) from Arabidopsis thaliana (Mouse-ear cress).